The chain runs to 566 residues: APC membrane recruitment protein 2 (566 aa).

Disordered stretches follow at residues 120–176 (KKNG…PGLI), 192–237 (TQKP…SPCS), 277–307 (VTGC…GKKV), and 342–533 (MIPP…RTKI). Composition is skewed to basic and acidic residues over residues 123–134 (GKSENVRGEQAE), 155–168 (SKKD…KEGA), and 192–204 (TQKP…KSTE). 2 stretches are compositionally biased toward basic and acidic residues: residues 364 to 377 (REVK…DRNA) and 389 to 411 (YRKE…RNSD). Residues 464–476 (PPLSHSHSKPLSP) show a composition bias toward low complexity. Composition is skewed to polar residues over residues 477 to 489 (VTTS…ASSN) and 504 to 517 (HTTN…SGSA).

The protein belongs to the Amer family.

The protein localises to the cell membrane. Negative regulator of the canonical Wnt signaling pathway involved in neuroectodermal patterning. Acts by specifically binding phosphatidylinositol 4,5-bisphosphate (PtdIns(4,5)P2), translocating to the cell membrane and interacting with key regulators of the canonical Wnt signaling pathway, such as components of the beta-catenin destruction complex. The sequence is that of APC membrane recruitment protein 2 (amer2) from Xenopus tropicalis (Western clawed frog).